We begin with the raw amino-acid sequence, 3955 residues long: Nonribosomal peptide synthetase fmqA (3955 aa).

The tract at residues 293 to 691 is adenylation 1; that stretch reads SYSELETLSL…AQACCTIRNV (399 aa). One can recognise a Carrier 1 domain in the interval 806–879; sequence THKETLIHQL…DLARLTDVVN (74 aa). S840 is subject to O-(pantetheine 4'-phosphoryl)serine. Positions 916-1187 are condensation 1; the sequence is QDIYPCTPLQ…IATVPLRVRL (272 aa). The interval 1371–1766 is adenylation 2; that stretch reads TYAELGELSD…DEVEKHVYQC (396 aa). The Carrier 2 domain maps to 1880 to 1956; sequence EPTSVAEREM…KIMSHESSLS (77 aa). S1917 is modified (O-(pantetheine 4'-phosphoryl)serine). The interval 1970–2261 is epimerase; the sequence is FALSPIQQMF…FTTMWPVVAE (292 aa). The segment at 2438 to 2724 is condensation 2; it reads EDIYPCSPSQ…FNPLPCRVHL (287 aa). Residues 2906-3299 are adenylation 3; sequence TYGQLDELSS…GEVEANVQHC (394 aa). The Carrier 3 domain occupies 3422 to 3498; sequence APSTEEEKKL…DLAKVAVPKS (77 aa). At S3459 the chain carries O-(pantetheine 4'-phosphoryl)serine. The tract at residues 3541 to 3805 is condensation 3; that stretch reads PGTQAQQFFI…CLNFIPLRVM (265 aa).

The protein belongs to the NRP synthetase family. As to quaternary structure, interacts with the mitogen-activated protein kinase mpkA.

It is found in the cytoplasmic vesicle. Its pathway is alkaloid biosynthesis. Functionally, nonribosomal peptide synthetase; part of the gene cluster that mediates the biosynthesis of the antitumor fumiquinazolines that confer a dual-usage capability to defend against phagocytes in the environment and animal hosts. The simplest member is fumiquinazoline F (FQF) with a 6-6-6 tricyclic core derived from anthranilic acid (Ant), tryptophan (Trp), and alanine (Ala). The trimodular NRPS fmqA is responsible for FQF formation. Modules 1, 2 and 3 of fmqA are predicted to activate and load Ant, Trp and Ala, respectively, providing for the assembly of an Ant-Trp-Ala-S-enzyme intermediate that would undergo double cyclization for chain release and generation of the tricyclic 6-6-6 product fumiquinazoline F. The presence of an E domain predicted for module 2 of fmqA is consistent with epimerization of L-Trp to D-Trp during assembly to generate the R-stereocenter at C14 of FQF. The FAD-dependent monooxygenase fmqB and the monomodular NRPS fmqC then maturate FQF to FQA. FmqB oxidizes the 2',3'-double bond of the indole side chain of FQF, and fmqC activates L-Ala as the adenylate, installs it as the pantetheinyl thioester on its carrier protein domain, and acylates the oxidized indole for subsequent intramolecular cyclization to create the 6-5-5-imidazolindolone of FQA. The FAD-linked oxidoreductase fmqD introduces a third layer of scaffold complexity by converting FQA to the spirohemiaminal FQC, presumably by catalyzing the formation of a transient imine within the pyrazinone ring. FQC subsequently converts nonenzymatically to the known cyclic aminal FQD. In Aspergillus fumigatus (strain ATCC MYA-4609 / CBS 101355 / FGSC A1100 / Af293) (Neosartorya fumigata), this protein is Nonribosomal peptide synthetase fmqA.